The primary structure comprises 577 residues: Cell adhesion molecule CEACAM20 (577 aa).

A signal peptide spans 1-30 (MELAGFHCCSWTVILLSALLPTTWRPPAAA). The Extracellular segment spans residues 31-430 (HFIHRADLLS…LQSSSMSPGA (400 aa)). 4 Ig-like C2-type domains span residues 48 to 137 (PLAK…ASLT), 142 to 223 (PDPV…TNLS), 239 to 324 (PNIE…LKLT), and 329 to 415 (PDQV…ASVL). An intrachain disulfide couples Cys72 to Cys120. N-linked (GlcNAc...) asparagine glycans are attached at residues Asn78 and Asn102. Disulfide bonds link Cys259-Cys307 and Cys358-Cys399. An N-linked (GlcNAc...) asparagine glycan is attached at Asn289. The chain crosses the membrane as a helical span at residues 431-451 (IAGIVIGILVAIALAIGLGYF). The Cytoplasmic segment spans residues 452–577 (LYSTKDRWTR…SLYCKITPSA (126 aa)). The interval 461 to 568 (RRRSASDTTS…YEKLLNSNHS (108 aa)) is disordered. Over residues 474–484 (IPPTSVMQSTP) the composition is skewed to polar residues. The segment covering 516 to 526 (DSPEQFYEKKP) has biased composition (basic and acidic residues). Over residues 536 to 551 (KPLPQIPKQPLMPPGP) the composition is skewed to pro residues. Phosphotyrosine is present on residues Tyr559 and Tyr570.

Belongs to the immunoglobulin superfamily. CEA family. In terms of assembly, interacts (via extracellular domain) with PTPRH (via extracellular domain); the interaction dephosphorylates CEACAM20. Interacts (phosphorylated form) with SYK (via SH2 domains); the interaction further enhances CEACAM20 phosphorylation. Post-translationally, phosphorylated on tyrosine residues by SYK, SRC and FYN in vitro. As to expression, strongly expressed in the small intestine and colon (at protein level). Minimal expression in other tissues (at protein level). Highly expressed in cecum, colon, ileum, jejunum, and testis, and also detected at lower levels in salivary gland and thymus.

The protein localises to the cell projection. The protein resides in the microvillus membrane. It is found in the apical cell membrane. Its function is as follows. Together with the tyrosine-protein kinase SYK, enhances production of the cytokine CXCL8/IL-8 via the NFKB pathway and may thus have a role in the intestinal immune response. The sequence is that of Cell adhesion molecule CEACAM20 from Mus musculus (Mouse).